A 396-amino-acid chain; its full sequence is Exodeoxyribonuclease 7 large subunit (396 aa).

Belongs to the XseA family. As to quaternary structure, heterooligomer composed of large and small subunits.

The protein resides in the cytoplasm. The enzyme catalyses Exonucleolytic cleavage in either 5'- to 3'- or 3'- to 5'-direction to yield nucleoside 5'-phosphates.. In terms of biological role, bidirectionally degrades single-stranded DNA into large acid-insoluble oligonucleotides, which are then degraded further into small acid-soluble oligonucleotides. This chain is Exodeoxyribonuclease 7 large subunit, found in Clostridium tetani (strain Massachusetts / E88).